We begin with the raw amino-acid sequence, 269 residues long: Flagellar brake protein YcgR (269 aa).

Positions 134 to 254 (QRRNFYRVTT…SRLLIQRYIT (121 aa)) constitute a PilZ domain.

It belongs to the YcgR family. In terms of assembly, monomer. Interacts with the flagellar basal bodies.

Its subcellular location is the bacterial flagellum basal body. Its function is as follows. Acts as a flagellar brake, regulating swimming and swarming in a bis-(3'-5') cyclic diguanylic acid (c-di-GMP)-dependent manner. Binds 1 c-di-GMP dimer per subunit. Increasing levels of c-di-GMP lead to decreased motility. The sequence is that of Flagellar brake protein YcgR from Nitrosomonas eutropha (strain DSM 101675 / C91 / Nm57).